Here is a 185-residue protein sequence, read N- to C-terminus: NAD(P)H-dependent FMN reductase PA1204 (185 aa).

Residues 13–20 (SLRSGSYN) and 81–83 (YNY) contribute to the FMN site. 115–122 (SAGRFGTA) lines the NAD(+) pocket.

It belongs to the SsuE family. As to quaternary structure, homodimer. It depends on FMN as a cofactor.

Its function is as follows. Has NAD(P)H-dependent FMN reductase activity. The chain is NAD(P)H-dependent FMN reductase PA1204 from Pseudomonas aeruginosa (strain ATCC 15692 / DSM 22644 / CIP 104116 / JCM 14847 / LMG 12228 / 1C / PRS 101 / PAO1).